A 316-amino-acid chain; its full sequence is MHQGSRITAVGHYQPARILTNEDLAGMVDTSDEWIRSRVGIRTRRIAGPDEPVDELAGHAAAKALASAGLTPADVDLVVVATSTAIDRSPNTAARVAARLGIPGPAALDLNVVCAGFTHALATADHAVRAGSASRALVVGADKMSEVVDWTDRTTCVLVGDGAGAAVVEACAPGEEPGIGPVLWGSVPEMGNAVRIEGTPPRFAQEGQSVYRWATTRLPAIARQACERSGLEPADLAAVVLHQANLRIVEPLAAKIGAVNAVVARDVVESGNTSAASIPLALSKLAERGEITTGDPALLFGFGGNLSYAGQVVRCP.

Residues Cys-114 and His-242 contribute to the active site. Residues Gln-243–Arg-247 form an ACP-binding region. Asn-272 is an active-site residue.

The protein belongs to the thiolase-like superfamily. FabH family. Homodimer.

The protein resides in the cytoplasm. It carries out the reaction malonyl-[ACP] + acetyl-CoA + H(+) = 3-oxobutanoyl-[ACP] + CO2 + CoA. It functions in the pathway lipid metabolism; fatty acid biosynthesis. In terms of biological role, catalyzes the condensation reaction of fatty acid synthesis by the addition to an acyl acceptor of two carbons from malonyl-ACP. Catalyzes the first condensation reaction which initiates fatty acid synthesis and may therefore play a role in governing the total rate of fatty acid production. Possesses both acetoacetyl-ACP synthase and acetyl transacylase activities. Its substrate specificity determines the biosynthesis of branched-chain and/or straight-chain of fatty acids. The chain is Beta-ketoacyl-[acyl-carrier-protein] synthase III 4 from Streptomyces coelicolor (strain ATCC BAA-471 / A3(2) / M145).